The chain runs to 93 residues: uncharacterized protein (93 aa).

It localises to the plastid. It is found in the chloroplast. This is an uncharacterized protein from Diacronema lutheri (Unicellular marine alga).